The following is a 297-amino-acid chain: Large ribosomal subunit protein uL18 (297 aa).

The segment covering 258 to 267 (KKAHPKKRWT) has biased composition (basic residues). The disordered stretch occupies residues 258–277 (KKAHPKKRWTEKKLTREQRQ). Residues 268-277 (EKKLTREQRQ) are compositionally biased toward basic and acidic residues.

This sequence belongs to the universal ribosomal protein uL18 family. Component of the large ribosomal subunit (LSU).

The protein localises to the cytoplasm. It localises to the nucleus. Functionally, component of the ribosome, a large ribonucleoprotein complex responsible for the synthesis of proteins in the cell. The small ribosomal subunit (SSU) binds messenger RNAs (mRNAs) and translates the encoded message by selecting cognate aminoacyl-transfer RNA (tRNA) molecules. The large subunit (LSU) contains the ribosomal catalytic site termed the peptidyl transferase center (PTC), which catalyzes the formation of peptide bonds, thereby polymerizing the amino acids delivered by tRNAs into a polypeptide chain. The nascent polypeptides leave the ribosome through a tunnel in the LSU and interact with protein factors that function in enzymatic processing, targeting, and the membrane insertion of nascent chains at the exit of the ribosomal tunnel. In Helianthus annuus (Common sunflower), this protein is Large ribosomal subunit protein uL18 (RPL5A).